The chain runs to 194 residues: Probable calcium-binding protein CML45 (194 aa).

Basic and acidic residues predominate over residues 52 to 63 (NNKDQQETLTKQ). Positions 52 to 81 (NNKDQQETLTKQEDDDDDDDDDDDDDDDDI) are disordered. A compositionally biased stretch (acidic residues) spans 64–81 (EDDDDDDDDDDDDDDDDI). EF-hand domains follow at residues 76-98 (DDDD…LGLF), 122-157 (ASLE…LGFK), and 160-194 (SYLD…TSFY). Positions 135, 137, 139, 146, 173, 175, 177, 179, and 184 each coordinate Ca(2+).

Functionally, potential calcium sensor. The chain is Probable calcium-binding protein CML45 from Arabidopsis thaliana (Mouse-ear cress).